The following is a 255-amino-acid chain: Tail completion protein p143 (255 aa).

It is found in the virion. Its function is as follows. Putative role in tail stability. The chain is Tail completion protein p143 from Escherichia phage T5 (Enterobacteria phage T5).